A 760-amino-acid polypeptide reads, in one-letter code: Cyclin-D-binding Myb-like transcription factor 1 (760 aa).

Positions 1-237 are interaction with CCND2; that stretch reads MSTVEEDSDT…TPEEIEKLKE (237 aa). The tract at residues 24–63 is disordered; the sequence is DTDGNLILHCPQNDPDEIDSEDSTEPPHKRLCLSSEDDQS. The span at 37 to 47 shows a compositional bias: acidic residues; sequence DPDEIDSEDST. Residues 87–170 are required for transcriptional activation; sequence VTMTATTEVA…IDILMNNIER (84 aa). Positions 87–458 are required for DNA-binding; that stretch reads VTMTATTEVA…DNTAISPSPM (372 aa). Residues 176–690 are interaction with CCND1, CCND2 and CCND3; the sequence is GIKDATEIIF…PTIVHQVHQT (515 aa). The Myb-like 1 domain occupies 225–263; that stretch reads GKYTPEEIEKLKELRIKHGNDWATIGAALGRSASSVKDR. The region spanning 268 to 333 is the HTH myb-type domain; sequence KDTCNTGKWT…KWLNYLNWKQ (66 aa). A DNA-binding region (H-T-H motif) is located at residues 306-329; it reads WAAVAERVGTRSEKQCRSKWLNYL. The Myb-like 2 domain maps to 339–388; sequence WTKEDEINLILRIAELDVADENDINWDLLAEGWSSVRSPQWLRSKWWTIK. Residues 459–760 form a required for transcriptional activation region; sequence AALQIPVQIT…KDVEDLVNCH (302 aa). Disordered regions lie at residues 593 to 614 and 738 to 760; these read DSDL…DTFP and IGSS…VNCH.

Belongs to the DMTF1 family. As to quaternary structure, interacts with the D-type cyclins CCND1, CCND2 and CCND3. Interaction with D-type cyclins may modulate transcriptional activation by this protein. In terms of processing, phosphorylated by the cyclin-D2/CDK4, cyclin-D3/CDK4 and cyclin-D2/CDK6 complexes and to a lesser extent by the cyclin-D1/CDK4 complex.

The protein resides in the nucleus. In terms of biological role, transcriptional activator which activates the CDKN2A/ARF locus in response to Ras-Raf signaling, thereby promoting p53/TP53-dependent growth arrest. Binds to the consensus sequence 5'-CCCG[GT]ATGT-3'. This Rattus norvegicus (Rat) protein is Cyclin-D-binding Myb-like transcription factor 1 (Dmtf1).